The sequence spans 86 residues: MEVKIIDIGEDYVRLVIKGEGHTYLNLLQHYLVEDEDVIVARYNIPHPLIGEPEIYIKTSGVDPLEAVKRANEKIIAACNTLLEQL.

This sequence belongs to the archaeal Rpo11/eukaryotic RPB11/RPC19 RNA polymerase subunit family. In terms of assembly, part of the RNA polymerase complex.

Its subcellular location is the cytoplasm. It catalyses the reaction RNA(n) + a ribonucleoside 5'-triphosphate = RNA(n+1) + diphosphate. Functionally, DNA-dependent RNA polymerase (RNAP) catalyzes the transcription of DNA into RNA using the four ribonucleoside triphosphates as substrates. The sequence is that of DNA-directed RNA polymerase subunit Rpo11 from Archaeoglobus fulgidus (strain ATCC 49558 / DSM 4304 / JCM 9628 / NBRC 100126 / VC-16).